The primary structure comprises 272 residues: Phosphonates import ATP-binding protein PhnC (272 aa).

Residues Leu2–Asp246 form the ABC transporter domain. ATP is bound at residue Gly35–Ser42. Positions Ala248–Arg272 are disordered. The span at Pro254–Arg272 shows a compositional bias: basic and acidic residues.

Belongs to the ABC transporter superfamily. Phosphonates importer (TC 3.A.1.9.1) family. As to quaternary structure, the complex is composed of two ATP-binding proteins (PhnC), two transmembrane proteins (PhnE) and a solute-binding protein (PhnD).

The protein localises to the cell inner membrane. It carries out the reaction phosphonate(out) + ATP + H2O = phosphonate(in) + ADP + phosphate + H(+). Part of the ABC transporter complex PhnCDE involved in phosphonates import. Responsible for energy coupling to the transport system. The chain is Phosphonates import ATP-binding protein PhnC from Chromohalobacter salexigens (strain ATCC BAA-138 / DSM 3043 / CIP 106854 / NCIMB 13768 / 1H11).